Here is a 200-residue protein sequence, read N- to C-terminus: Dephospho-CoA kinase (200 aa).

The 198-residue stretch at 3 to 200 folds into the DPCK domain; it reads VLGLTGSIGM…LSGKPAAATR (198 aa). Residue 11–16 coordinates ATP; sequence GMGKTT.

The protein belongs to the CoaE family.

Its subcellular location is the cytoplasm. The catalysed reaction is 3'-dephospho-CoA + ATP = ADP + CoA + H(+). Its pathway is cofactor biosynthesis; coenzyme A biosynthesis; CoA from (R)-pantothenate: step 5/5. Functionally, catalyzes the phosphorylation of the 3'-hydroxyl group of dephosphocoenzyme A to form coenzyme A. The protein is Dephospho-CoA kinase of Brucella abortus (strain 2308).